A 434-amino-acid polypeptide reads, in one-letter code: MKRNRLSFMNKVLQSSPAVKQPKLGCHSSLSQTHMRAALLDWGNLPHHVVLRIFQYLPLIDRARASSVCRRWNEVFHIPDLWRKFEFELNQSAASYFNSTHPDLIQQIIKKHAAHLQYVSFKVDSSTESAEAACGILSQLVNCSIQTLGLISTAKPSFLNMSKSHFVSALTVLFVNSISLSSIKIEDTPVDDPSLSILVANNSGTLRRLKMSSCPHVSSNGILCVADHCQGLRELALNYYMLSDKLLLALSNETHVNLEHLRIDVMSENAGQIEFHSIKRQSWDALIKHSPGVNVVMYFFLYEEEMETFFKEETPVTHLYFGRSVSKEILGRLGLNCPRLTELVVCANGIQVIDTELICIAEHCKNLTALGLSECEVSCSAFIEFVRLCGRKLTHLSIMEEVLIPDDVYSLGEIHTEVSKYLGRIWFPDVMPLW.

The F-box domain occupies 39 to 85 (LLDWGNLPHHVVLRIFQYLPLIDRARASSVCRRWNEVFHIPDLWRKF). LRR repeat units follow at residues 187–213 (DTPV…KMSS), 214–239 (CPHV…ALNY), 242–265 (LSDK…RIDV), 322–347 (GRSV…VVCA), 349–374 (GIQV…GLSE), and 375–400 (CEVS…SIME).

Part of the SCF (SKP1-CUL1-F-box) E3 ubiquitin-protein ligase complex SCF(FBXL21) composed of CUL1, SKP1, RBX1 and FBXL21. Interacts with CRY1 and CRY2.

The protein resides in the cytoplasm. The protein localises to the cytosol. Its subcellular location is the nucleus. It functions in the pathway protein modification; protein ubiquitination. Its function is as follows. Substrate-recognition component of the SCF(FBXL21) E3 ubiquitin ligase complex involved in circadian rhythm function. Plays a key role in the maintenance of both the speed and the robustness of the circadian clock oscillation. The SCF(FBXL21) complex mainly acts in the cytosol and mediates ubiquitination of CRY proteins (CRY1 and CRY2), leading to CRY proteins stabilization. The SCF(FBXL21) complex counteracts the activity of the SCF(FBXL3) complex and protects CRY proteins from degradation. Involved in the hypothalamic suprachiasmatic nucleus (SCN) clock regulating temporal organization of the daily activities. This chain is F-box/LRR-repeat protein 21 (FBXL21), found in Bos taurus (Bovine).